The primary structure comprises 963 residues: Phosphofurin acidic cluster sorting protein 1 (963 aa).

The segment covering 1–22 has biased composition (gly residues); that stretch reads MAERGGAGGGPGGAGGGSGQRG. 2 disordered regions span residues 1-72 and 78-97; these read MAER…SSST and VAVASGSAPPGGPGPGRTPA. Alanine 2 is subject to N-acetylalanine. Residue serine 28 is modified to Phosphoserine. The residue at position 46 (threonine 46) is a Phosphothreonine. Residues 53–72 are compositionally biased toward low complexity; the sequence is ATSSSSSTSAAAASSSSSST. The involved in binding to AP-1 stretch occupies residues 168–175; sequence ETELQLTF. Tyrosine 251 is subject to Phosphotyrosine. The span at 262-273 shows a compositional bias: basic and acidic residues; sequence GIKSKLSDRSPD. Disordered stretches follow at residues 262–299 and 377–428; these read GIKSKLSDRSPDIDNYSEEEEESFSSEQEGSDDPLHGQ and NPSD…GKDT. Positions 276 to 293 are enriched in acidic residues; sequence NYSEEEEESFSSEQEGSD. The stretch at 353-377 forms a coiled coil; sequence HVSREQIREVEEDLDELYDSLEMYN. Serine 379 and serine 381 each carry phosphoserine. Over residues 406–428 the composition is skewed to polar residues; it reads MSQSSSQTEIGSLNSKGSLGKDT. Phosphoserine occurs at positions 430 and 495. Disordered regions lie at residues 476–542 and 760–804; these read PEKV…HSTQ and SPST…SMSS. A compositionally biased stretch (polar residues) spans 483 to 496; that stretch reads MKSSKTDLQGSASP. Threonine 504 bears the Phosphothreonine mark. A phosphoserine mark is found at serine 519, serine 528, serine 529, serine 531, and serine 534. A compositionally biased stretch (low complexity) spans 770-804; the sequence is SPVVSLTVPSTSPPSSSGLSRDATATPPSSPSMSS.

It belongs to the PACS family. Associates with AP-1 and AP-3 but not with AP-2 complexes. Interacts with FURIN. Forms a ternary complex with FURIN and AP-1. Interacts with NPHP1; the interaction is dependent of NPHP1 phosphorylation by CK2. Interacts with PKD2 (via acidic region). Interacts with SORL1. Interacts with WDR37. As to quaternary structure, (Microbial infection) Interacts with HIV-1 Nef. In terms of assembly, (Microbial infection) Interacts with Epstein-barr virus protein BBLF1.

Its subcellular location is the golgi apparatus. It localises to the trans-Golgi network. In terms of biological role, coat protein that is involved in the localization of trans-Golgi network (TGN) membrane proteins that contain acidic cluster sorting motifs. Controls the endosome-to-Golgi trafficking of furin and mannose-6-phosphate receptor by connecting the acidic-cluster-containing cytoplasmic domain of these molecules with the adapter-protein complex-1 (AP-1) of endosomal clathrin-coated membrane pits. Involved in HIV-1 nef-mediated removal of MHC-I from the cell surface to the TGN. Required for normal ER Ca2+ handling in lymphocytes. Together with WDR37, it plays an essential role in lymphocyte development, quiescence and survival. Required for stabilizing peripheral lymphocyte populations. The protein is Phosphofurin acidic cluster sorting protein 1 (PACS1) of Homo sapiens (Human).